Consider the following 358-residue polypeptide: Cytoplasmic tRNA 2-thiolation protein 1 (358 aa).

The protein belongs to the TtcA family. CTU1/NCS6/ATPBD3 subfamily.

It localises to the cytoplasm. It functions in the pathway tRNA modification; 5-methoxycarbonylmethyl-2-thiouridine-tRNA biosynthesis. Functionally, plays a central role in 2-thiolation of mcm(5)S(2)U at tRNA wobble positions of tRNA(Lys), tRNA(Glu) and tRNA(Gln). Directly binds tRNAs and probably acts by catalyzing adenylation of tRNAs, an intermediate required for 2-thiolation. It is unclear whether it acts as a sulfurtransferase that transfers sulfur from thiocarboxylated URM1 onto the uridine of tRNAs at wobble position. Prior mcm(5) tRNA modification by the elongator complex is required for 2-thiolation. May also be involved in protein urmylation. The sequence is that of Cytoplasmic tRNA 2-thiolation protein 1 from Candida glabrata (strain ATCC 2001 / BCRC 20586 / JCM 3761 / NBRC 0622 / NRRL Y-65 / CBS 138) (Yeast).